We begin with the raw amino-acid sequence, 1199 residues long: Tubulin monoglutamylase TTLL4 (1199 aa).

Polar residues predominate over residues 1 to 25 (MASAGTQHYSIGLRQKNSFKQSGPS). 3 disordered regions span residues 1-43 (MASA…RVWP), 472-517 (IQLG…ELVD), and 525-544 (RDEN…SAVS). Positions 477–495 (SEKERPEEARELDSSDRDI) are enriched in basic and acidic residues. The segment covering 506–517 (AETEDTEEELVD) has biased composition (acidic residues). Positions 604 to 947 (RKLLRWKMST…VLPNAEDIIS (344 aa)) constitute a TTL domain. Ser-691 carries the phosphoserine modification. Residues Lys-721, 727–728 (RG), 749–752 (QRYL), and 762–764 (KFD) each bind ATP. Arg-727 contacts a protein. Arg-788 contributes to the L-glutamate binding site. Position 809 to 810 (809 to 810 (TN)) interacts with ATP. L-glutamate-binding residues include Tyr-811, Ser-812, and Lys-833. Mg(2+) is bound by residues Asp-893, Glu-906, and Asn-908. The interval 918–1029 (PLDISIKGQM…RGQFERIFPS (112 aa)) is c-MTBD region. Lys-924 lines the L-glutamate pocket. Residues 1130–1141 (GTTPKSKKTQAG) show a composition bias toward polar residues. Positions 1130-1199 (GTTPKSKKTQ…ISDSLLAVSP (70 aa)) are disordered. Residues 1151-1160 (SSKDSEDTSK) show a composition bias toward basic and acidic residues. The segment covering 1164–1192 (LSTQTLPVIKCSGQTSRLSASSTFQSISD) has biased composition (polar residues).

The protein belongs to the tubulin--tyrosine ligase family. Mg(2+) serves as cofactor.

Its subcellular location is the cytoplasm. The protein resides in the cell projection. It localises to the cilium. It is found in the cytoskeleton. The protein localises to the cilium basal body. It carries out the reaction L-glutamyl-[protein] + L-glutamate + ATP = gamma-L-glutamyl-L-glutamyl-[protein] + ADP + phosphate + H(+). In terms of biological role, monoglutamylase which modifies both tubulin and non-tubulin proteins, adding a single glutamate on the gamma-carboxyl group of specific glutamate residues of target proteins. Involved in the side-chain initiation step of the polyglutamylation reaction but not in the elongation step. Preferentially modifies beta-tail tubulin over the alpha-tubulin. Monoglutamylates nucleosome assembly proteins NAP1L1 and NAP1L4. Monoglutamylates nucleotidyltransferase CGAS, leading to inhibition of CGAS catalytic activity, thereby preventing antiviral defense function. Involved in KLF4 glutamylation which impedes its ubiquitination, thereby leading to somatic cell reprogramming, pluripotency maintenance and embryogenesis. The chain is Tubulin monoglutamylase TTLL4 from Homo sapiens (Human).